The following is a 192-amino-acid chain: Superoxide dismutase [Fe] (192 aa).

Residues His27, His74, Asp157, and His161 each contribute to the Fe cation site.

Belongs to the iron/manganese superoxide dismutase family. Homodimer. Fe cation serves as cofactor.

It catalyses the reaction 2 superoxide + 2 H(+) = H2O2 + O2. Its function is as follows. Destroys superoxide anion radicals which are normally produced within the cells and which are toxic to biological systems. In Bordetella pertussis (strain Tohama I / ATCC BAA-589 / NCTC 13251), this protein is Superoxide dismutase [Fe] (sodB).